The chain runs to 74 residues: Protein YkgV (74 aa).

The chain is Protein YkgV from Escherichia coli (strain K12).